A 177-amino-acid polypeptide reads, in one-letter code: Thymidine kinase (177 aa).

Residue 11–18 (GPMFSGKS) coordinates ATP. The Proton acceptor role is filled by Glu83. Residue Phe113 participates in substrate binding. 2 residues coordinate Zn(2+): Cys138 and Cys141. 157–161 (IEIIG) serves as a coordination point for substrate. Cys170 and Cys173 together coordinate Zn(2+).

It belongs to the thymidine kinase family. In terms of assembly, homotetramer. Two molecules of substrate bind to each enzyme tetramer.

The catalysed reaction is thymidine + ATP = dTMP + ADP + H(+). Functionally, phosphorylates thymidine and thymidine analogs, such as azidothymidine (AZT). Part of the salvage pathway for pyrimidine deoxyribonucleotide synthesis. In Homo sapiens (Human), this protein is Thymidine kinase (OPG101).